Reading from the N-terminus, the 577-residue chain is Dihydroxy-acid dehydratase (577 aa).

Residues 1–10 (MLKRSFDKSK) show a composition bias toward basic and acidic residues. Residues 1–22 (MLKRSFDKSKLPSRHVTEGPSR) are disordered. Residue cysteine 56 participates in [2Fe-2S] cluster binding. Aspartate 88 contributes to the Mg(2+) binding site. Position 129 (cysteine 129) interacts with [2Fe-2S] cluster. The Mg(2+) site is built by aspartate 130 and lysine 131. N6-carboxylysine is present on lysine 131. [2Fe-2S] cluster is bound at residue cysteine 201. Glutamate 453 serves as a coordination point for Mg(2+). The active-site Proton acceptor is serine 479.

It belongs to the IlvD/Edd family. Homodimer. [2Fe-2S] cluster serves as cofactor. Mg(2+) is required as a cofactor.

It catalyses the reaction (2R)-2,3-dihydroxy-3-methylbutanoate = 3-methyl-2-oxobutanoate + H2O. It carries out the reaction (2R,3R)-2,3-dihydroxy-3-methylpentanoate = (S)-3-methyl-2-oxopentanoate + H2O. The protein operates within amino-acid biosynthesis; L-isoleucine biosynthesis; L-isoleucine from 2-oxobutanoate: step 3/4. It participates in amino-acid biosynthesis; L-valine biosynthesis; L-valine from pyruvate: step 3/4. Its function is as follows. Functions in the biosynthesis of branched-chain amino acids. Catalyzes the dehydration of (2R,3R)-2,3-dihydroxy-3-methylpentanoate (2,3-dihydroxy-3-methylvalerate) into 2-oxo-3-methylpentanoate (2-oxo-3-methylvalerate) and of (2R)-2,3-dihydroxy-3-methylbutanoate (2,3-dihydroxyisovalerate) into 2-oxo-3-methylbutanoate (2-oxoisovalerate), the penultimate precursor to L-isoleucine and L-valine, respectively. The protein is Dihydroxy-acid dehydratase of Dinoroseobacter shibae (strain DSM 16493 / NCIMB 14021 / DFL 12).